The primary structure comprises 653 residues: 23S rRNA 5-hydroxycytidine C2501 synthase (653 aa).

This sequence belongs to the peptidase U32 family. Interacts with precursors of the 50S ribosomal subunit.

Iron-sulfur clusters and prephenate are required for ho5C2501 formation. In terms of biological role, responsible for the formation of the 5-hydroxycytidine modification at the C2501 position (ho5C2501) of 23S rRNA. May be a Fe-S protein that catalyzes ho5C2501 formation using prephenate as a hydroxyl group donor. The chain is 23S rRNA 5-hydroxycytidine C2501 synthase from Escherichia coli (strain K12).